Reading from the N-terminus, the 65-residue chain is Large ribosomal subunit protein bL35 (65 aa).

The segment at 1 to 26 is disordered; the sequence is MPKIKTLRSAAKRFKKTESGKFKRKQ.

This sequence belongs to the bacterial ribosomal protein bL35 family.

The sequence is that of Large ribosomal subunit protein bL35 from Buchnera aphidicola subsp. Baizongia pistaciae (strain Bp).